The primary structure comprises 249 residues: Triosephosphate isomerase (249 aa).

Position 9–11 (9–11 (NWK)) interacts with substrate. The active-site Electrophile is His-95. Glu-167 serves as the catalytic Proton acceptor. Residues Gly-173, Ser-213, and 234-235 (GG) each bind substrate.

Belongs to the triosephosphate isomerase family. Homodimer.

Its subcellular location is the cytoplasm. It catalyses the reaction D-glyceraldehyde 3-phosphate = dihydroxyacetone phosphate. The protein operates within carbohydrate biosynthesis; gluconeogenesis. It participates in carbohydrate degradation; glycolysis; D-glyceraldehyde 3-phosphate from glycerone phosphate: step 1/1. Involved in the gluconeogenesis. Catalyzes stereospecifically the conversion of dihydroxyacetone phosphate (DHAP) to D-glyceraldehyde-3-phosphate (G3P). The chain is Triosephosphate isomerase from Solibacter usitatus (strain Ellin6076).